Consider the following 4687-residue polypeptide: Plectin (4687 aa).

The interval 1 to 1473 (MVAGMLMPLD…SELTTLTSQY (1473 aa)) is globular 1. Arginine 21 is subject to Phosphoserine. Valine 26 carries the phosphotyrosine modification. The interval 111–158 (RRRSPHVQTMQGPLGCPPKRGPLPAEDPAREERQVYRRKEREEGAPET) is disordered. Basic and acidic residues predominate over residues 137–154 (DPAREERQVYRRKEREEG). An actin-binding region spans residues 181-406 (DERDRVQKKT…YVSSLYDAMP (226 aa)). 2 Calponin-homology (CH) domains span residues 185-288 (RVQK…LHFK) and 301-406 (MTAK…DAMP). The stretch at 648–722 (LQSTQRRPEL…ERARNDESQL (75 aa)) is one Spectrin 1 repeat. Serine 723 is subject to Phosphoserine. 2 Spectrin repeats span residues 743–827 (KLLN…REDH) and 840–933 (LQTQ…AIVQ). Threonine 818 is modified (phosphothreonine). The SH3 domain maps to 944–1001 (RGHVPLLAVCDYKQVEVTVHKGDQCQLVGPAQPFHWKVLSSSGSEAAVPSVCFLVPPP). Phosphoserine is present on serine 1050. Residues 1318–1418 (RERVTQLLER…QKFAKQYINA (101 aa)) form a Spectrin 4 repeat. At serine 1438 the chain carries Phosphoserine. Coiled-coil stretches lie at residues 1472-1692 (QYIK…ERWL) and 1724-2760 (SFAE…TSQA). The interval 1474–2758 (IKFISETLRR…LAHSEEIATS (1285 aa)) is central fibrous rod domain. Residues 1623 to 1647 (EEAEAQKRQAQEEAERLRRQVQDES) form a disordered region. Residue serine 1724 is modified to Phosphoserine. Lysine 1728 carries the post-translational modification N6-acetyllysine. 5 disordered regions span residues 1741 to 1764 (VTVTQLREEAERRAQQQAEAERAR), 1796 to 1846 (SLAQ…GTAQ), 2096 to 2139 (EDTM…AEEE), 2164 to 2188 (LRERAEQESARQLQLAQEAAQKRLQ), and 2218 to 2307 (RLRS…DAEM). Composition is skewed to basic and acidic residues over residues 1801-1839 (DAEKQKEEAEREARRRGKAEEQAVRQRELAEQELEKQRQ), 2096-2111 (EDTMRSKELAEQEAAR), and 2119-2131 (EEQRRREAEERVQ). Residues 2173 to 2182 (ARQLQLAQEA) are compositionally biased toward low complexity. The segment covering 2218-2261 (RLRSEAEAARRAAEEAEEAREQAEREAAQSRKQVEEAERLKQSA) has biased composition (basic and acidic residues). The span at 2262–2275 (EEQAQAQAQAQAAA) shows a compositional bias: low complexity. The segment covering 2276 to 2291 (EKLRKEAEQEAARRAQ) has biased composition (basic and acidic residues). At serine 2634 the chain carries Phosphoserine. Lysine 2639 bears the N6-acetyllysine mark. The tract at residues 2671 to 2710 (QEEQQRQQQQMEQEKQELVASMEEARRRQREAEEGVRRKQ) is disordered. Positions 2682-2710 (EQEKQELVASMEEARRRQREAEEGVRRKQ) are enriched in basic and acidic residues. Residues 2759–4687 (QAAATKALPN…SLGGPESAVA (1929 aa)) are globular 2. At serine 2777 the chain carries Phosphoserine. Position 2784 is a phosphotyrosine (tyrosine 2784). Plectin repeat units lie at residues 2791 to 2828 (QKVPAQQLQEAGILSMEELQRLTQGHTTVAELTQREDV), 2829 to 2866 (RHYLKGGSSIAGLLLKPTNEKLSVYTALQRQLLSPGTA), 2867 to 2904 (LILLEAQAASGFLLDPVRNRRLTVNEAVKEGVVGPELH), 2905 to 2942 (HKLLSAERAVTGYKDPYTGEQISLFQAMKKDLIVRDHG), 2943 to 2980 (IRLLEAQIATGGIIDPVHSHRVPVDVAYQRGYFDEEMN), and 2984 to 3018 (ADPSDDTKGFFDPNTHENLTYLQLLERCVEDPETG). At serine 2805 the chain carries Phosphoserine. Phosphothreonine is present on threonine 2889. Tyrosine 3036 carries the phosphotyrosine modification. N6-acetyllysine occurs at positions 3056 and 3094. 6 Plectin repeats span residues 3119–3156 (ALVPAAELLDSGVISHEVYQQLQRGERSVREVAEADEV), 3157–3194 (RQALRGTSVIAGVWLEEAGQKLSIYEALRRDLLQPEVA), 3195–3232 (VALLEAQAGTGHIIDPATSARLTVDEAVRAGLVGPEMH), 3233–3270 (EKLLSAEKAVTGYRDPYSGQSVSLFQALKKGLIPREQG), 3271–3308 (LRLLDAQLSTGGIVDPSKSHRVPLDVAYARGYLDKETN), and 3311–3346 (LTSPRDDARVYLDPSTREPVTYSQLQQRCRSDQLTG). Tyrosine 3365 is modified (phosphotyrosine). Lysine 3423 is subject to N6-acetyllysine. Plectin repeat units follow at residues 3488 to 3525 (RTLLQGSGCLAGIYLEDSKEKVTIYEAMRRGLLRASTA), 3526 to 3563 (TLLLEAQAATGFLVDPVRNQRLYVHEAVKAGVVGPELH), 3564 to 3601 (EKLLSAEKAVTGYKDPYSGSTISLFQAMKKGLVLRDHA), 3602 to 3639 (IRLLEAQIATGGIIDPVHSHRLPVDVAYQRGYFDEEMN), and 3643 to 3677 (ADPSDDTKGFFDPNTHENLTYLQLLERCVEDPETG). Serine 3583 carries the phosphoserine modification. Threonine 3788 bears the Phosphothreonine mark. Tyrosine 3793 is modified (phosphotyrosine). 5 Plectin repeats span residues 3823-3860 (WRYLYGTGSVAGVYLPGSRQTLTIYQALKKGLLSAEVA), 3861-3898 (RLLLEAQAATGFLLDPVKGERLTVDEAVRKGLVGPELH), 3899-3936 (DRLLSAERAVTGYRDPYTEQPISLFQAMKKELIPAEEA), 3937-3974 (LRLLDAQLATGGIVDPRLGFHLPLEVAYQRGYLNKDTH), and 3978-4011 (SEPSEVRSYVDPSTDERLSYTQLLKRCRRDDNSG). Threonine 4033 is subject to Phosphothreonine. Serine 4057 is subject to Phosphoserine. Plectin repeat units lie at residues 4066-4103 (QKFLEGTSCIAGVFVDATKERLSVYQAMKKGIIRPGTA), 4104-4141 (FELLEAQAATGYVIDPIKGLKLTVEEAVRMGIVGPEFK), 4142-4179 (DKLLSAERAVTGYKDPYSGKLISLFQAMKKGLILKDHG), 4180-4217 (IRLLEAQIATGGIIDPEESHRLPVEVAYKRGLFDEEMN), 4221-4255 (TDPSDDTKGFFDPNTEENLTYLQLMERCITDPQTG), and 4268-4308 (RKTS…HQTY). Residues 4253 to 4303 (QTGLCLLPLKEKKRERKTSSKSSVRKRRVVIVDPETGKEMSVYEAYRKGLI) form a binding to intermediate filaments region. Residues serine 4385, serine 4387, serine 4388, serine 4389, serine 4392, serine 4393, serine 4394, and serine 4395 each carry the phosphoserine modification. Tyrosine 4396 bears the Phosphotyrosine mark. 2 positions are modified to phosphoserine: serine 4399 and serine 4409. Plectin repeat units lie at residues 4411–4448 (SDPTEETGPVAGILDTETLEKVSITEAMHRNLVDNITG), 4449–4486 (QRLLEAQACTGGIIDPSTGERFPVTEAVNKGLVDKIMV), 4487–4524 (DRINLAQKAFCGFEDPRTKTKMSAAQALKKGWLYYEAG), 4525–4562 (QRFLEVQYLTGGLIEPDTPGRVSLDEALQRGTVDARTA), and 4563–4600 (QKLRDVSAYSKYLTCPKTKLKISYKDALDRSMVEEGTG). A Phosphothreonine modification is found at threonine 4414. Residue threonine 4542 is modified to Phosphothreonine; by CDK1. Phosphoserine is present on residues serine 4610 and serine 4616. Over residues 4614–4674 (YYSPYSVSGS…SGYGRRYASG (61 aa)) the composition is skewed to low complexity. The tract at residues 4614 to 4687 (YYSPYSVSGS…SLGGPESAVA (74 aa)) is disordered. Tyrosine 4618 carries the post-translational modification Phosphotyrosine. Residues serine 4619, serine 4621, and serine 4625 each carry the phosphoserine modification. Threonine 4626 is modified (phosphothreonine). Residues 4628–4643 (GSRTGSRTGSRAGSRR) form a 4 X 4 AA tandem repeats of G-S-R-X region. The residue at position 4629 (serine 4629) is a Phosphoserine. An omega-N-methylarginine mark is found at arginine 4630 and arginine 4643. Serine 4645 and serine 4678 each carry phosphoserine.

Belongs to the plakin or cytolinker family. As to quaternary structure, homodimer or homotetramer. Interacts (via actin-binding domain) with SYNE3. Interacts (via calponin-homology (CH) 1 domain) with VIM (via rod region). Interacts (via N-terminus) with DST isoform 2 (via N-terminus). Interacts with FER. Interacts with TOR1A. Interacts with ANK3. Identified in complexes that contain VIM, EZR, AHNAK, BFSP1, BFSP2, ANK2, PLEC, PRX and spectrin. Post-translationally, phosphorylated by CDK1; regulates dissociation from intermediate filaments during mitosis. Isoform 2 is phosphorylated on Ser-21 and Tyr-26. In terms of tissue distribution, widely expressed with highest expression in skeletal muscle and lowest in thymus.

It localises to the cytoplasm. Its subcellular location is the cytoskeleton. The protein localises to the cell junction. The protein resides in the hemidesmosome. It is found in the cell projection. It localises to the podosome. Its function is as follows. Interlinks intermediate filaments with microtubules and microfilaments and anchors intermediate filaments to desmosomes or hemidesmosomes. May be involved not only in the cross-linking and stabilization of cytoskeletal intermediate filaments network, but also in the regulation of their dynamics. The protein is Plectin (Plec) of Rattus norvegicus (Rat).